The sequence spans 560 residues: Triacylglyceride transporter MSMEG_3069/MSMEI_2992 (560 aa).

Helical transmembrane passes span 16–36, 48–68, 78–98, 108–128, 143–163, 168–188, 200–220, 229–249, 269–289, 307–327, 336–356, 368–388, 411–431, and 477–497; these read LAVL…VDIM, QVTP…PLLG, MLIQ…ALSS, IIQG…AADL, AAQE…VWLF, AVFW…HFSL, VDVI…VGLY, VLPS…VAFF, PFLA…VTLV, AFLL…GGWL, VVLI…HWSV, FTLP…GLVI, VVVA…AWGF, and IFLS…LISG. The beta-hairpin stretch occupies residues 362–371; the sequence is RHNLGLFTLP. The disordered stretch occupies residues 519-560; that stretch reads IDPYDAGDADDAPTEMLDLPTQVLSAPPSDPGDERPGRHRAP.

Belongs to the major facilitator superfamily. P55 (TC 2.A.1.3.34) family.

It is found in the cell inner membrane. With respect to regulation, resistance to ethidium bromide is inhibited by reserpine. In terms of biological role, in association with lipoprotein LprG transports triacyglycerides (TAG) across the inner cell membrane into the periplasm; TAG probably regulates lipid metabolism and growth regulation and plays a structural role in the outer membrane. TAG (and maybe other lipids) enters the central cavity of the P55 transporter from within the cell inner membrane via clefts on the cytoplasmic face of P55 between TM5-TM8 and TM2-TM11. From there the lipid is probably transferred to the hydrophobic cavity of LprG. Confers resistance to ethidium bromide, possibly acting as an efflux pump, requires LprG lipoprotein for normal function. Export of ethidium bromide can be complemented by the equivalent operon from M.tuberculosis (lprG-Rv1410c). Involved in drug susceptibilty, its expression alone partially complements the antibiotic susceptibilty of a double lprG-mfs deletion. Probably does not function as a bona fide drug efflux pump, but instead plays a role in outer membrane biogenesis. Probably required with LprG for normal surface localization of lipoarabinomannan (LAM). The sequence is that of Triacylglyceride transporter MSMEG_3069/MSMEI_2992 from Mycolicibacterium smegmatis (strain ATCC 700084 / mc(2)155) (Mycobacterium smegmatis).